A 207-amino-acid chain; its full sequence is Outer-membrane lipoprotein LolB (207 aa).

The N-terminal stretch at 1–21 is a signal peptide; sequence MPLPDFRFIRLLPLAALVLTA. A lipid anchor (N-palmitoyl cysteine) is attached at C22. A lipid anchor (S-diacylglycerol cysteine) is attached at C22.

It belongs to the LolB family. As to quaternary structure, monomer.

The protein resides in the cell outer membrane. Functionally, plays a critical role in the incorporation of lipoproteins in the outer membrane after they are released by the LolA protein. This Escherichia coli O6:K15:H31 (strain 536 / UPEC) protein is Outer-membrane lipoprotein LolB.